Reading from the N-terminus, the 226-residue chain is MNTLLVNQLQKKLGYTFKQNELLLQALTHRSASSKHNERLEFLGDSILSYVIANALYHRFPRVDEGDMSRMRATLVRGNTLAELAREFELGECLRLGPGELKSGGFRRESILADTVEALIGAIFLDSDIQNIENIILKWYENRLAEISPGDKQKDPKTRLQEYLQGRHLPLPSYVVVQVRGEAHDQEFTIHCQISGIDQPVKGMGTSRRKAEQAAAEQALIQLELE.

In terms of domain architecture, RNase III spans 6–128 (VNQLQKKLGY…LIGAIFLDSD (123 aa)). Glutamate 41 is a binding site for Mg(2+). Aspartate 45 is a catalytic residue. Mg(2+)-binding residues include aspartate 114 and glutamate 117. Glutamate 117 is an active-site residue. In terms of domain architecture, DRBM spans 155-225 (DPKTRLQEYL…AEQALIQLEL (71 aa)).

The protein belongs to the ribonuclease III family. Homodimer. Mg(2+) serves as cofactor.

It is found in the cytoplasm. It catalyses the reaction Endonucleolytic cleavage to 5'-phosphomonoester.. Digests double-stranded RNA. Involved in the processing of primary rRNA transcript to yield the immediate precursors to the large and small rRNAs (23S and 16S). Processes some mRNAs, and tRNAs when they are encoded in the rRNA operon. Processes pre-crRNA and tracrRNA of type II CRISPR loci if present in the organism. The sequence is that of Ribonuclease 3 from Proteus mirabilis (strain HI4320).